The following is a 289-amino-acid chain: MRILEKAPAKINLSLDVRHKRPDGYHEVEMVMTTIDLADRVELTELAEDKVTVSSHNRFVPDDQRNLAYQAAMLMKERYGIKKGVSIFITKVIPVAAGLAGGSSDAAAVFRGLNRLWDLKLSMNELAELGAEIGSDVSFCVHGGTALATGRGEKIRHIETPPHCWVVLAKPTIGVSTAEVYKQLKVDEIEHPDVQGMIAAIEEKNFQKMCDKLGNVLESVTLNMHPEVAMIKNQMKRFGADAVLMSGSGPTVFGLVQYESKVQRIYNGLRGFCDQVYAVRMIGEQNELD.

The active site involves Lys-10. 94–104 contributes to the ATP binding site; sequence PVAAGLAGGSS. Asp-136 is a catalytic residue.

Belongs to the GHMP kinase family. IspE subfamily.

The enzyme catalyses 4-CDP-2-C-methyl-D-erythritol + ATP = 4-CDP-2-C-methyl-D-erythritol 2-phosphate + ADP + H(+). Its pathway is isoprenoid biosynthesis; isopentenyl diphosphate biosynthesis via DXP pathway; isopentenyl diphosphate from 1-deoxy-D-xylulose 5-phosphate: step 3/6. Functionally, catalyzes the phosphorylation of the position 2 hydroxy group of 4-diphosphocytidyl-2C-methyl-D-erythritol. The polypeptide is 4-diphosphocytidyl-2-C-methyl-D-erythritol kinase (Bacillus licheniformis (strain ATCC 14580 / DSM 13 / JCM 2505 / CCUG 7422 / NBRC 12200 / NCIMB 9375 / NCTC 10341 / NRRL NRS-1264 / Gibson 46)).